The primary structure comprises 465 residues: Phosphatidate cytidylyltransferase (465 aa).

The interval 1-60 (MSDQPPAENADVRQRRAPESPVTERLRAPARDDARPTSDESDMEGILQDEDSDAGSKNKE) is disordered. The segment covering 10–38 (ADVRQRRAPESPVTERLRAPARDDARPTS) has biased composition (basic and acidic residues). Acidic residues predominate over residues 39–53 (DESDMEGILQDEDSD). 8 helical membrane passes run 95–117 (WVVR…TRGA), 121–143 (MFLV…LAVY), 158–178 (FLLT…WGIV), 187–207 (FLVA…FVSF), 214–234 (GYYM…LLIV), 239–259 (FIIQ…AMII), 288–308 (GFIG…LALY), and 367–387 (IALS…ASGF).

It belongs to the CDS family.

The protein localises to the membrane. It catalyses the reaction a 1,2-diacyl-sn-glycero-3-phosphate + CTP + H(+) = a CDP-1,2-diacyl-sn-glycerol + diphosphate. It functions in the pathway phospholipid metabolism; CDP-diacylglycerol biosynthesis; CDP-diacylglycerol from sn-glycerol 3-phosphate: step 3/3. Functionally, provides CDP-diacylglycerol, an important precursor for the synthesis of phosphatidylinositol (PtdIns). The polypeptide is Phosphatidate cytidylyltransferase (cdgs-1) (Caenorhabditis elegans).